The primary structure comprises 383 residues: Cell division protein FtsZ (383 aa).

GTP contacts are provided by residues 20 to 24, 107 to 109, glutamate 138, arginine 142, and asparagine 186; these read GGGGN and GTG.

It belongs to the FtsZ family. Homodimer. Polymerizes to form a dynamic ring structure in a strictly GTP-dependent manner. Interacts directly with several other division proteins.

It is found in the cytoplasm. Essential cell division protein that forms a contractile ring structure (Z ring) at the future cell division site. The regulation of the ring assembly controls the timing and the location of cell division. One of the functions of the FtsZ ring is to recruit other cell division proteins to the septum to produce a new cell wall between the dividing cells. Binds GTP and shows GTPase activity. The polypeptide is Cell division protein FtsZ (Shigella flexneri).